The chain runs to 144 residues: Maximins 3/H9 type 2 (144 aa).

The first 18 residues, 1-18 (MNFKYIVAVSFLIASAYA), serve as a signal peptide directing secretion. 2 consecutive propeptides follow at residues 19–43 (RSVQNDEQSLSQRDVLEEESLREIR) and 74–123 (TAEE…KEKR). I143 bears the Isoleucine amide mark.

It belongs to the bombinin family. Expressed by the skin glands.

It is found in the secreted. Functionally, maximin-3 shows antibacterial activity against both Gram-positive and Gram-negative bacteria. It also shows antimicrobial activity against the fungus C.albicans, but not against A.flavus nor P.uticale. It has little hemolytic activity. It possess a significant cytotoxicity against tumor cell lines. It possess a significant anti-HIV activity. It shows high spermicidal activity. In terms of biological role, maximin-H9 shows antimicrobial activity against bacteria and against the fungus C.albicans. Shows strong hemolytic activity. The sequence is that of Maximins 3/H9 type 2 from Bombina maxima (Giant fire-bellied toad).